The chain runs to 133 residues: Holo-[acyl-carrier-protein] synthase (133 aa).

Positions 8 and 57 each coordinate Mg(2+).

It belongs to the P-Pant transferase superfamily. AcpS family. It depends on Mg(2+) as a cofactor.

The protein resides in the cytoplasm. It carries out the reaction apo-[ACP] + CoA = holo-[ACP] + adenosine 3',5'-bisphosphate + H(+). In terms of biological role, transfers the 4'-phosphopantetheine moiety from coenzyme A to a Ser of acyl-carrier-protein. This chain is Holo-[acyl-carrier-protein] synthase, found in Chelativorans sp. (strain BNC1).